An 864-amino-acid polypeptide reads, in one-letter code: Valine--tRNA ligase (864 aa).

The short motif at 42–52 (PTISGKLHIGH) is the 'HIGH' region element. Residues 589 to 593 (KMSKS) carry the 'KMSKS' region motif. Residue Lys-592 coordinates ATP.

It belongs to the class-I aminoacyl-tRNA synthetase family. ValS type 2 subfamily. In terms of assembly, monomer.

It is found in the cytoplasm. It carries out the reaction tRNA(Val) + L-valine + ATP = L-valyl-tRNA(Val) + AMP + diphosphate. Its function is as follows. Catalyzes the attachment of valine to tRNA(Val). As ValRS can inadvertently accommodate and process structurally similar amino acids such as threonine, to avoid such errors, it has a 'posttransfer' editing activity that hydrolyzes mischarged Thr-tRNA(Val) in a tRNA-dependent manner. The polypeptide is Valine--tRNA ligase (Wolbachia pipientis wMel).